The primary structure comprises 313 residues: Protoheme IX farnesyltransferase (313 aa).

A run of 9 helical transmembrane segments spans residues 35 to 55 (LVVF…HPVL), 56 to 76 (AATS…LNMW), 98 to 118 (VSSP…VATL), 120 to 140 (VLVN…YAVV), 153 to 173 (IVIG…AATG), 180 to 200 (IILF…LALF), 226 to 246 (ILLY…LGYF), 248 to 268 (AAYG…AFNV), and 292 to 312 (LFLL…AAMI).

The protein belongs to the UbiA prenyltransferase family. Protoheme IX farnesyltransferase subfamily.

The protein resides in the cell inner membrane. The enzyme catalyses heme b + (2E,6E)-farnesyl diphosphate + H2O = Fe(II)-heme o + diphosphate. The protein operates within porphyrin-containing compound metabolism; heme O biosynthesis; heme O from protoheme: step 1/1. Converts heme B (protoheme IX) to heme O by substitution of the vinyl group on carbon 2 of heme B porphyrin ring with a hydroxyethyl farnesyl side group. In Afipia carboxidovorans (strain ATCC 49405 / DSM 1227 / KCTC 32145 / OM5) (Oligotropha carboxidovorans), this protein is Protoheme IX farnesyltransferase.